Consider the following 96-residue polypeptide: Small ribosomal subunit protein bS6 (96 aa).

This sequence belongs to the bacterial ribosomal protein bS6 family.

Its function is as follows. Binds together with bS18 to 16S ribosomal RNA. The chain is Small ribosomal subunit protein bS6 (rpsF) from Mycobacterium bovis (strain ATCC BAA-935 / AF2122/97).